Here is a 703-residue protein sequence, read N- to C-terminus: Cyclic AMP-dependent transcription factor ATF-6 beta (703 aa).

At Ala2 the chain carries N-acetylalanine. A transcription activation region spans residues 2-86 (AELMLLSEIA…ELLPIFPDLQ (85 aa)). The Cytoplasmic portion of the chain corresponds to 2–396 (AELMLLSEIA…ELKLGSGNRK (395 aa)). Disordered regions lie at residues 87–114 (VKSEPSSPCSSSSLSSESSRLSTEPSSE), 229–248 (LDGSSGKALPTRKPPLQPKP), and 293–317 (EGPAPSLPRPERKSIVPAPMPGNSC). A compositionally biased stretch (low complexity) spans 89 to 114 (SEPSSPCSSSSLSSESSRLSTEPSSE). One can recognise a bZIP domain in the interval 325-388 (LLKRQQRMIK…EALLAENSEL (64 aa)). Positions 327–347 (KRQQRMIKNRESACQSRRKKK) are basic motif. The leucine-zipper stretch occupies residues 350–357 (LQGLEARL). A helical; Signal-anchor for type II membrane protein transmembrane segment spans residues 397–417 (VVCIMVFLLFIAFNFGPVSIS). At 418 to 703 (EPPSAPISPR…SHQPLYLNHP (286 aa)) the chain is on the lumenal side. Residues 447–479 (PVQGVEPLQGSSQGPKEPQPSPTDQPSFSNLTA) form a disordered region. N-linked (GlcNAc...) asparagine glycans are attached at residues Asn476 and Asn505. Residues 521 to 565 (QRHQRGRRKIPQRAQERQKSQPRKKSPPVKAVPIQPPGPPERDSV) form a disordered region. A compositionally biased stretch (basic residues) spans 522-531 (RHQRGRRKIP). Residues Asn610, Asn627, and Asn676 are each glycosylated (N-linked (GlcNAc...) asparagine). A compositionally biased stretch (polar residues) spans 660–676 (STVPPSLRKQPSPTPGN). Residues 660–703 (STVPPSLRKQPSPTPGNATGGPLPVSAASQAHQASHQPLYLNHP) form a disordered region. Residues 685–696 (SAASQAHQASHQ) show a composition bias toward low complexity.

It belongs to the bZIP family. ATF subfamily. Homodimer and heterodimer with ATF6-alpha. The dimer interacts with the nuclear transcription factor Y (NF-Y) trimer through direct binding to NF-Y subunit C (NF-YC). In terms of processing, N-glycosylated. Post-translationally, during unfolded protein response, a fragment of approximately 60 kDa containing the cytoplasmic transcription factor domain is released by proteolysis. The cleavage is probably performed sequentially by site-1 (MBTPS1, S1P) and site-2 (MBTPS2, S2P) proteases. Ubiquitous.

It localises to the endoplasmic reticulum membrane. The protein localises to the nucleus. Its function is as follows. Precursor of the transcription factor form (Processed cyclic AMP-dependent transcription factor ATF-6 beta), which is embedded in the endoplasmic reticulum membrane. Endoplasmic reticulum stress promotes processing of this form, releasing the transcription factor form that translocates into the nucleus, where it activates transcription of genes involved in the unfolded protein response (UPR). Functionally, transcription factor that acts in the unfolded protein response (UPR) pathway by activating UPR target genes induced during ER stress. Binds DNA on the 5'-CCAC[GA]-3' half of the ER stress response element (ERSE) (5'-CCAATN(9)CCAC[GA]-3') when NF-Y is bound to ERSE. This is Cyclic AMP-dependent transcription factor ATF-6 beta (ATF6B) from Homo sapiens (Human).